The primary structure comprises 603 residues: Elongation factor 4 (603 aa).

Residues 9-191 (SNIRNFSIIA…RIVRQIPPPK (183 aa)) enclose the tr-type G domain. Residues 21–26 (DHGKST) and 138–141 (NKID) contribute to the GTP site.

The protein belongs to the TRAFAC class translation factor GTPase superfamily. Classic translation factor GTPase family. LepA subfamily.

The protein localises to the cell inner membrane. It carries out the reaction GTP + H2O = GDP + phosphate + H(+). In terms of biological role, required for accurate and efficient protein synthesis under certain stress conditions. May act as a fidelity factor of the translation reaction, by catalyzing a one-codon backward translocation of tRNAs on improperly translocated ribosomes. Back-translocation proceeds from a post-translocation (POST) complex to a pre-translocation (PRE) complex, thus giving elongation factor G a second chance to translocate the tRNAs correctly. Binds to ribosomes in a GTP-dependent manner. The chain is Elongation factor 4 from Idiomarina loihiensis (strain ATCC BAA-735 / DSM 15497 / L2-TR).